The following is a 420-amino-acid chain: Gamma-glutamyl phosphate reductase (420 aa).

This sequence belongs to the gamma-glutamyl phosphate reductase family.

Its subcellular location is the cytoplasm. The catalysed reaction is L-glutamate 5-semialdehyde + phosphate + NADP(+) = L-glutamyl 5-phosphate + NADPH + H(+). It participates in amino-acid biosynthesis; L-proline biosynthesis; L-glutamate 5-semialdehyde from L-glutamate: step 2/2. Its function is as follows. Catalyzes the NADPH-dependent reduction of L-glutamate 5-phosphate into L-glutamate 5-semialdehyde and phosphate. The product spontaneously undergoes cyclization to form 1-pyrroline-5-carboxylate. The sequence is that of Gamma-glutamyl phosphate reductase from Cereibacter sphaeroides (strain KD131 / KCTC 12085) (Rhodobacter sphaeroides).